We begin with the raw amino-acid sequence, 310 residues long: Carbamate kinase 1 (310 aa).

Homodimer (predominantly) and homotetramer.

It localises to the cytoplasm. It carries out the reaction hydrogencarbonate + NH4(+) + ATP = carbamoyl phosphate + ADP + H2O + H(+). It functions in the pathway metabolic intermediate metabolism; carbamoyl phosphate degradation; CO(2) and NH(3) from carbamoyl phosphate: step 1/1. With respect to regulation, inhibited by adenosine(5')pentaphospho(5')adenosine (Ap5A), Ap6A and to a much lower extent by Ap4A. Its function is as follows. Catalyzes the reversible synthesis of carbamate and ATP from carbamoyl phosphate and ADP. Can also catalyze, although with low efficiency, the phosphorylation of bicarbonate, leading to the formation of carboxyphosphate, an unstable intermediate found in the reactions catalyzed by carbamoyl-phosphate synthase and biotin carboxylase. Can also use acetate. The sequence is that of Carbamate kinase 1 (arcC1) from Enterococcus faecium (Streptococcus faecium).